The sequence spans 178 residues: uncharacterized protein (178 aa).

The next 4 helical transmembrane spans lie at 29–49 (AATG…AYLF), 76–96 (VISI…YFLL), 105–125 (PGIL…NPIF), and 139–159 (IITT…SISF).

It localises to the cell membrane. This is an uncharacterized protein from Bacillus subtilis (strain 168).